The primary structure comprises 103 residues: Large ribosomal subunit protein uL24 (103 aa).

This sequence belongs to the universal ribosomal protein uL24 family. In terms of assembly, part of the 50S ribosomal subunit.

One of two assembly initiator proteins, it binds directly to the 5'-end of the 23S rRNA, where it nucleates assembly of the 50S subunit. Its function is as follows. One of the proteins that surrounds the polypeptide exit tunnel on the outside of the subunit. This chain is Large ribosomal subunit protein uL24, found in Sinorhizobium medicae (strain WSM419) (Ensifer medicae).